Consider the following 368-residue polypeptide: Cell division protein FtsZ 1 (368 aa).

GTP is bound by residues 52–56, 139–141, Glu-170, Arg-174, and Asp-217; these read GGGCN and GTG.

This sequence belongs to the FtsZ family. In terms of assembly, homodimer. Polymerizes to form a dynamic ring structure in a strictly GTP-dependent manner. Interacts directly with several other division proteins.

The protein localises to the cytoplasm. Its function is as follows. Essential cell division protein that forms a contractile ring structure (Z ring) at the future cell division site. The regulation of the ring assembly controls the timing and the location of cell division. One of the functions of the FtsZ ring is to recruit other cell division proteins to the septum to produce a new cell wall between the dividing cells. Binds GTP and shows GTPase activity. In Archaeoglobus fulgidus (strain ATCC 49558 / DSM 4304 / JCM 9628 / NBRC 100126 / VC-16), this protein is Cell division protein FtsZ 1.